The primary structure comprises 682 residues: Homeobox-leucine zipper protein HDG7 (682 aa).

A disordered region spans residues 33-65; the sequence is LSDDSFDAMSGDEDKQEQRPKKKKRKTKYHRHT. A compositionally biased stretch (basic residues) spans 52-65; sequence PKKKKRKTKYHRHT. Positions 57-116 form a DNA-binding region, homeobox; the sequence is RKTKYHRHTSYQIQELESFFKECPHPNEKQRLELGKKLTLESKQIKFWFQNRRTQMKTQL. Residues 105–186 are a coiled coil; sequence FQNRRTQMKT…LDRICALANR (82 aa). Residues 214 to 429 form the START domain; that stretch reads SGGTSLMFMD…LQRQCESFTM (216 aa).

It belongs to the HD-ZIP homeobox family. Class IV subfamily. In terms of assembly, interacts with AIL7/PLT7. As to expression, expressed in cells around the base of leaf primordia, in the outermost 2 to 3 cell layers along the boundary between two leaf primordia. Expressed in lateral root primordia and tips, and in the epidermal boundaries of two cotyledons at heart-stage embryo.

The protein resides in the nucleus. Its function is as follows. Probable transcription factor that binds to the DNA sequence 5'-GCATTAAATGC-3'. Seems to promote cell differentiation. This Arabidopsis thaliana (Mouse-ear cress) protein is Homeobox-leucine zipper protein HDG7.